The following is a 223-amino-acid chain: AN1-type zinc finger protein 6 (223 aa).

The segment at 8–42 adopts an A20-type zinc-finger fold; that stretch reads SQAPMLCSTGCGFYGNPRTNGMCSVCYKEHLQRQN. C14, C18, C30, and C33 together coordinate Zn(2+). Residues 41–155 form a disordered region; the sequence is QNSSNGRISP…PSEEQSKSLE (115 aa). S49 carries the post-translational modification Phosphoserine. 2 stretches are compositionally biased toward polar residues: residues 77–110 and 137–148; these read ALDS…STSV and SSVSDTTQQPSE. The AN1-type zinc finger occupies 158-204; that stretch reads KQKKNRCFMCRKKVGLTGFECRCGNVYCGVHRYSDVHNCSYNYKADA. 8 residues coordinate Zn(2+): C164, C167, C178, C180, C185, H188, H194, and C196. N6-acetyllysine is present on K219.

As to quaternary structure, interacts with PKN1. Interacts with TRAF2. Interacts with mono- and polyubiquitin. Interacts with PEX6. Interacts with PEX5 (Cys-linked ubiquitinated).

Its subcellular location is the cytoplasm. Involved in regulation of TNF-alpha induced NF-kappa-B activation and apoptosis. Involved in modulation of 'Lys-48'-linked polyubiquitination status of TRAF2 and decreases association of TRAF2 with RIPK1. Required for PTS1 target sequence-dependent protein import into peroxisomes and PEX5 stability; may cooperate with PEX6. In vitro involved in PEX5 export from the cytosol to peroxisomes. This chain is AN1-type zinc finger protein 6 (Zfand6), found in Mus musculus (Mouse).